A 353-amino-acid chain; its full sequence is MTAILERRESESLWGRFCNWITSTENRLYIGWFGVLMIPTLLTATSVFIIAFIAAPPVDIDGIREPVSGSLLYGNNIISGAIIPTSAAIGLHFYPIWEAASVDEWLYNGGPYELIVLHFLLGVACYMGREWELSFRLGMRPWIAVAYSAPVAAAAAVFLIYPIGQGSFSDGMPLGISGTFNFMIVFQAEHNILMHPFHMLGVAGVFGGSLFSAMHGSLVTSSLIRETTENESANAGYRFGQEEETYNIVAAHGYFGRLIFQYASFNNSRSLHFFLAAWPVVGIWFTALGISTMAFNLNGFNFNQSVVDSQGRVINTWADIINRANLGMEVMHERNAHNFPLDLAAVEAPSTNG.

The residue at position 2 (Thr2) is an N-acetylthreonine. Phosphothreonine is present on Thr2. 3 helical membrane-spanning segments follow: residues 29 to 46 (YIGWFGVLMIPTLLTATS), 118 to 133 (HFLLGVACYMGREWEL), and 142 to 156 (WIAVAYSAPVAAAAA). Residue His118 coordinates chlorophyll a. A pheophytin a-binding site is contributed by Tyr126. [CaMn4O5] cluster contacts are provided by Asp170 and Glu189. A helical transmembrane segment spans residues 197–218 (FHMLGVAGVFGGSLFSAMHGSL). His198 is a binding site for chlorophyll a. A quinone-binding positions include His215 and 264–265 (SF). Fe cation is bound at residue His215. His272 serves as a coordination point for Fe cation. The helical transmembrane segment at 274–288 (FLAAWPVVGIWFTAL) threads the bilayer. Residues His332, Glu333, Asp342, and Ala344 each coordinate [CaMn4O5] cluster. The propeptide occupies 345 to 353 (AVEAPSTNG).

It belongs to the reaction center PufL/M/PsbA/D family. PSII is composed of 1 copy each of membrane proteins PsbA, PsbB, PsbC, PsbD, PsbE, PsbF, PsbH, PsbI, PsbJ, PsbK, PsbL, PsbM, PsbT, PsbX, PsbY, PsbZ, Psb30/Ycf12, at least 3 peripheral proteins of the oxygen-evolving complex and a large number of cofactors. It forms dimeric complexes. The D1/D2 heterodimer binds P680, chlorophylls that are the primary electron donor of PSII, and subsequent electron acceptors. It shares a non-heme iron and each subunit binds pheophytin, quinone, additional chlorophylls, carotenoids and lipids. D1 provides most of the ligands for the Mn4-Ca-O5 cluster of the oxygen-evolving complex (OEC). There is also a Cl(-1) ion associated with D1 and D2, which is required for oxygen evolution. The PSII complex binds additional chlorophylls, carotenoids and specific lipids. serves as cofactor. Tyr-161 forms a radical intermediate that is referred to as redox-active TyrZ, YZ or Y-Z. In terms of processing, C-terminally processed by CTPA; processing is essential to allow assembly of the oxygen-evolving complex and thus photosynthetic growth.

It localises to the plastid. The protein localises to the chloroplast thylakoid membrane. It catalyses the reaction 2 a plastoquinone + 4 hnu + 2 H2O = 2 a plastoquinol + O2. Its function is as follows. Photosystem II (PSII) is a light-driven water:plastoquinone oxidoreductase that uses light energy to abstract electrons from H(2)O, generating O(2) and a proton gradient subsequently used for ATP formation. It consists of a core antenna complex that captures photons, and an electron transfer chain that converts photonic excitation into a charge separation. The D1/D2 (PsbA/PsbD) reaction center heterodimer binds P680, the primary electron donor of PSII as well as several subsequent electron acceptors. The sequence is that of Photosystem II protein D1 from Nandina domestica (Heavenly bamboo).